A 383-amino-acid chain; its full sequence is UDP-N-acetylglucosamine 2-epimerase (383 aa).

The protein belongs to the UDP-N-acetylglucosamine 2-epimerase family.

The enzyme catalyses UDP-N-acetyl-alpha-D-glucosamine = UDP-N-acetyl-alpha-D-mannosamine. It participates in capsule biogenesis; capsule polysaccharide biosynthesis. Functionally, non-hydrolyzing C2-epimerase involved in the biosynthesis of capsular polysaccharides. Catalyzes the C2 epimerization of UDP-N-acetylglucosamine (UDP-GlcNAc) to form UDP-N-acetylmannosamine (UDP-ManNAc). This chain is UDP-N-acetylglucosamine 2-epimerase, found in Campylobacter jejuni.